We begin with the raw amino-acid sequence, 128 residues long: Fluoride-specific ion channel FluC (128 aa).

4 helical membrane-spanning segments follow: residues 5-25 (IVAI…LSLA), 35-55 (LGTL…AVVF), 67-87 (LFVI…SVEV), and 96-116 (FGWA…LTAL). Positions 75 and 78 each coordinate Na(+).

This sequence belongs to the fluoride channel Fluc/FEX (TC 1.A.43) family.

It localises to the cell inner membrane. It carries out the reaction fluoride(in) = fluoride(out). With respect to regulation, na(+) is not transported, but it plays an essential structural role and its presence is essential for fluoride channel function. In terms of biological role, fluoride-specific ion channel. Important for reducing fluoride concentration in the cell, thus reducing its toxicity. The protein is Fluoride-specific ion channel FluC of Burkholderia lata (strain ATCC 17760 / DSM 23089 / LMG 22485 / NCIMB 9086 / R18194 / 383).